The chain runs to 151 residues: Large ribosomal subunit protein uL15 (151 aa).

Residues 1–60 (MAENNPLKIHNLRPAPGAKTAKTRVGRGEASKGKTAGRGTKGTKARYQVPERFEGGQMPL) are disordered.

This sequence belongs to the universal ribosomal protein uL15 family. In terms of assembly, part of the 50S ribosomal subunit.

Its function is as follows. Binds to the 23S rRNA. This chain is Large ribosomal subunit protein uL15, found in Streptomyces coelicolor (strain ATCC BAA-471 / A3(2) / M145).